The primary structure comprises 245 residues: 1-(5-phosphoribosyl)-5-[(5-phosphoribosylamino)methylideneamino] imidazole-4-carboxamide isomerase (245 aa).

Aspartate 7 functions as the Proton acceptor in the catalytic mechanism. Aspartate 129 acts as the Proton donor in catalysis.

This sequence belongs to the HisA/HisF family.

It is found in the cytoplasm. It catalyses the reaction 1-(5-phospho-beta-D-ribosyl)-5-[(5-phospho-beta-D-ribosylamino)methylideneamino]imidazole-4-carboxamide = 5-[(5-phospho-1-deoxy-D-ribulos-1-ylimino)methylamino]-1-(5-phospho-beta-D-ribosyl)imidazole-4-carboxamide. It functions in the pathway amino-acid biosynthesis; L-histidine biosynthesis; L-histidine from 5-phospho-alpha-D-ribose 1-diphosphate: step 4/9. The protein is 1-(5-phosphoribosyl)-5-[(5-phosphoribosylamino)methylideneamino] imidazole-4-carboxamide isomerase of Escherichia coli O9:H4 (strain HS).